Here is a 673-residue protein sequence, read N- to C-terminus: UvrABC system protein B (673 aa).

In terms of domain architecture, Helicase ATP-binding spans 26–183; sequence ANFEAGLAKQ…RHLTDLQYTR (158 aa). 39–46 contributes to the ATP binding site; the sequence is GVTGSGKT. A Beta-hairpin motif is present at residues 92 to 115; it reads YYDYYQPEAYVPSSDTFIEKDSSI. One can recognise a Helicase C-terminal domain in the interval 431-597; it reads QVDDLMSEIH…SVERPISDIM (167 aa). The tract at residues 601-631 is disordered; sequence REDAAEKKSGKGRSKSRQVAEETPDYRAMKP. Residues 618–630 are compositionally biased toward basic and acidic residues; that stretch reads QVAEETPDYRAMK. The 36-residue stretch at 635–670 folds into the UVR domain; sequence AGKLKSLEQKMYQHAKDLEFEAAAQIRDQIQKLKTA.

The protein belongs to the UvrB family. Forms a heterotetramer with UvrA during the search for lesions. Interacts with UvrC in an incision complex.

It localises to the cytoplasm. The UvrABC repair system catalyzes the recognition and processing of DNA lesions. A damage recognition complex composed of 2 UvrA and 2 UvrB subunits scans DNA for abnormalities. Upon binding of the UvrA(2)B(2) complex to a putative damaged site, the DNA wraps around one UvrB monomer. DNA wrap is dependent on ATP binding by UvrB and probably causes local melting of the DNA helix, facilitating insertion of UvrB beta-hairpin between the DNA strands. Then UvrB probes one DNA strand for the presence of a lesion. If a lesion is found the UvrA subunits dissociate and the UvrB-DNA preincision complex is formed. This complex is subsequently bound by UvrC and the second UvrB is released. If no lesion is found, the DNA wraps around the other UvrB subunit that will check the other stand for damage. The chain is UvrABC system protein B from Xanthomonas oryzae pv. oryzae (strain PXO99A).